Here is a 564-residue protein sequence, read N- to C-terminus: NADPH oxidase 1 (564 aa).

Over 1–9 (MGNWVVNHW) the chain is Cytoplasmic. Residues 10-30 (FSVLFLVVWLGLNVFLFVDAF) traverse the membrane as a helical segment. Residues 31-44 (LKYEKADKYYYTRK) lie on the Extracellular side of the membrane. The helical transmembrane segment at 45–72 (ILGSTLACARASALCLNFNSTLILLPVC) threads the bilayer. One can recognise a Ferric oxidoreductase domain in the interval 54-283 (RASALCLNFN…LAPVILYICE (230 aa)). The Cytoplasmic segment spans residues 73–102 (RNLLSFLRGTCSFCSRTLRKQLDHNLTFHK). 2 residues coordinate heme: His101 and His115. A helical membrane pass occupies residues 103–123 (LVAYMICLHTAIHIIAHLFNF). Residues 124 to 168 (DCYSRSRQATDGSLASILSSLSHDEKKGGSWLNPIQSRNTTVEYV) lie on the Extracellular side of the membrane. An N-linked (GlcNAc...) asparagine glycan is attached at Asn162. A helical transmembrane segment spans residues 169–189 (TFTSIAGLTGVIMTIALILMV). The Cytoplasmic segment spans residues 190-206 (TSATEFIRRSYFEVFWY). A helical transmembrane segment spans residues 207 to 227 (THHLFIFYILGLGIHGIGGIV). 2 residues coordinate heme: His209 and His221. The Extracellular portion of the chain corresponds to 228-396 (RGQTEESMNE…TASEDVFQYE (169 aa)). An N-linked (GlcNAc...) asparagine glycan is attached at Asn236. The region spanning 284–391 (RILRFYRSQQ…DGPFGTASED (108 aa)) is the FAD-binding FR-type domain. 338–344 (HPFTLTS) contributes to the FAD binding site. Residues 397–417 (VAVLVGAGIGVTPFASILKSI) traverse the membrane as a helical segment. An interaction with NOXO1 region spans residues 397–536 (VAVLVGAGIG…GVFLCGPRTL (140 aa)). The Cytoplasmic portion of the chain corresponds to 418–564 (WYKFQCADHN…VQFYFNKENF (147 aa)). Thr430 is subject to Phosphothreonine.

As to quaternary structure, NOX1, NOXA1, NOXO1, RAC1 and CYBA forms a functional multimeric complex supporting reactive oxygen species (ROS) production. Interacts with NOXO1. Interacts (via FAD-binding FR-type domain) with ARHGEF7 (via PH domain). The phosphorylated form at Thr-430 interacts with NOXA1 with greater affinity. It depends on FAD as a cofactor. Phosphorylation at Thr-430 mediated by PKC/PRKBC positively regulates its interaction with NOXA1 and enzyme activity. Detected in colon, uterus, prostate, and colon carcinoma, but not in peripheral blood leukocytes.

Its subcellular location is the cell projection. The protein localises to the invadopodium membrane. The protein resides in the cell membrane. It carries out the reaction NADPH + 2 O2 = 2 superoxide + NADP(+) + H(+). With respect to regulation, the oxidase activity is potentiated by NOXA1, NOXO1 and RAC1. NADPH oxidase that catalyzes the generation of superoxide from molecular oxygen utilizing NADPH as an electron donor. In Homo sapiens (Human), this protein is NADPH oxidase 1.